Reading from the N-terminus, the 209-residue chain is Small ribosomal subunit protein uS4 (209 aa).

Positions 22-45 are disordered; that stretch reads RGRNPLLRKPNPPGQHGMQRKKKS. The 62-residue stretch at 93–154 folds into the S4 RNA-binding domain; the sequence is CRLDNIVYRL…KSKRLAIVTE (62 aa).

It belongs to the universal ribosomal protein uS4 family. As to quaternary structure, part of the 30S ribosomal subunit. Contacts protein S5. The interaction surface between S4 and S5 is involved in control of translational fidelity.

In terms of biological role, one of the primary rRNA binding proteins, it binds directly to 16S rRNA where it nucleates assembly of the body of the 30S subunit. Functionally, with S5 and S12 plays an important role in translational accuracy. This is Small ribosomal subunit protein uS4 from Chlamydia trachomatis serovar A (strain ATCC VR-571B / DSM 19440 / HAR-13).